Consider the following 788-residue polypeptide: ATP-dependent 6-phosphofructokinase, platelet type (788 aa).

Methionine 1 carries the post-translational modification N-acetylmethionine. The tract at residues 1–399 (MSDQDSSTSS…NLNTYKRLAI (399 aa)) is N-terminal catalytic PFK domain 1. Phosphoserine is present on residues serine 2, serine 6, serine 12, and serine 21. ATP contacts are provided by residues glycine 34, 97–98 (RC), and 127–130 (GDGS). Mg(2+) is bound at residue aspartate 128. Serine 142 bears the Phosphoserine mark. Substrate-binding positions include 173–175 (SID), arginine 210, 217–219 (MGR), glutamate 273, arginine 301, and 307–310 (HVQR). Residue aspartate 175 is the Proton acceptor of the active site. At serine 386 the chain carries Phosphoserine. Lysine 395 is subject to N6-acetyllysine. An interdomain linker region spans residues 400–411 (KEPDDKIPKSNC). Residues 412–788 (NVAIINVGAP…VHNHGELSAI (377 aa)) form a C-terminal regulatory PFK domain 2 region. Residue arginine 481 coordinates beta-D-fructose 2,6-bisphosphate. At lysine 486 the chain carries N6-acetyllysine. Beta-D-fructose 2,6-bisphosphate is bound by residues 538-542 (TVSNN), arginine 576, 583-585 (MGG), and glutamate 639. Serine 540 carries O-linked (GlcNAc) serine glycosylation. Residue tyrosine 651 is modified to Phosphotyrosine. Beta-D-fructose 2,6-bisphosphate contacts are provided by residues arginine 665 and 671 to 674 (HMQQ). Position 688 is an N6-acetyllysine (lysine 688). Beta-D-fructose 2,6-bisphosphate is bound at residue arginine 744.

It belongs to the phosphofructokinase type A (PFKA) family. ATP-dependent PFK group I subfamily. Eukaryotic two domain clade 'E' sub-subfamily. In terms of assembly, homo- and heterotetramers. Phosphofructokinase (PFK) enzyme functions as a tetramer composed of different combinations of 3 types of subunits, called PFKM (M), PFKL (L) and PFKP (P). The composition of the PFK tetramer differs according to the tissue type it is present in. The kinetic and regulatory properties of the tetrameric enzyme are dependent on the subunit composition, hence can vary across tissues. Interacts with ATG4B; promoting phosphorylation of ATG4B. The cofactor is Mg(2+). GlcNAcylation decreases enzyme activity. Post-translationally, phosphorylation at Ser-386 promotes interaction with ATG4B. As to expression, expressed at high level in neuroendocrine tissues.

The protein localises to the cytoplasm. The catalysed reaction is beta-D-fructose 6-phosphate + ATP = beta-D-fructose 1,6-bisphosphate + ADP + H(+). The protein operates within carbohydrate degradation; glycolysis; D-glyceraldehyde 3-phosphate and glycerone phosphate from D-glucose: step 3/4. With respect to regulation, allosterically activated by ADP, AMP, or fructose 2,6-bisphosphate, and allosterically inhibited by ATP or citrate. Functionally, catalyzes the phosphorylation of D-fructose 6-phosphate to fructose 1,6-bisphosphate by ATP, the first committing step of glycolysis. This Rattus norvegicus (Rat) protein is ATP-dependent 6-phosphofructokinase, platelet type (Pfkp).